Reading from the N-terminus, the 297-residue chain is Glycine--tRNA ligase alpha subunit (297 aa).

It belongs to the class-II aminoacyl-tRNA synthetase family. As to quaternary structure, tetramer of two alpha and two beta subunits.

Its subcellular location is the cytoplasm. The enzyme catalyses tRNA(Gly) + glycine + ATP = glycyl-tRNA(Gly) + AMP + diphosphate. The chain is Glycine--tRNA ligase alpha subunit (glyQ) from Halalkalibacterium halodurans (strain ATCC BAA-125 / DSM 18197 / FERM 7344 / JCM 9153 / C-125) (Bacillus halodurans).